Here is a 486-residue protein sequence, read N- to C-terminus: Ribosomal RNA small subunit methyltransferase F (486 aa).

S-adenosyl-L-methionine contacts are provided by residues 124-130 (ASAPGSK), E148, D175, and D193. C246 (nucleophile) is an active-site residue.

Belongs to the class I-like SAM-binding methyltransferase superfamily. RsmB/NOP family.

It localises to the cytoplasm. It carries out the reaction cytidine(1407) in 16S rRNA + S-adenosyl-L-methionine = 5-methylcytidine(1407) in 16S rRNA + S-adenosyl-L-homocysteine + H(+). Functionally, specifically methylates the cytosine at position 1407 (m5C1407) of 16S rRNA. The sequence is that of Ribosomal RNA small subunit methyltransferase F from Shewanella putrefaciens (strain CN-32 / ATCC BAA-453).